The chain runs to 419 residues: Delta(8)-fatty-acid desaturase (419 aa).

The Cytochrome b5 heme-binding domain occupies 1 to 64 (MKSKRQALSP…LKRMPKINPS (64 aa)). Residues His-24 and His-47 each contribute to the heme site. Residues 110 to 130 (LGVLGYFLMVQYQMYFIGAVL) form a helical membrane-spanning segment. The Histidine box-1 motif lies at 143 to 147 (HDICH). The chain crosses the membrane as a helical span at residues 156-176 (WNNLVGLVFGNGLQGFSVTCW). Residues 180–184 (HNAHH) carry the Histidine box-2 motif. A run of 3 helical transmembrane segments spans residues 226–246 (YFLV…VLTV), 266–286 (IGLA…MPSI), and 290–310 (LLVF…VVFM). Residues 355–359 (QIEHH) carry the Histidine box-3 motif.

This sequence belongs to the fatty acid desaturase type 1 family. The cofactor is Fe cation.

The protein localises to the membrane. The catalysed reaction is an (11Z,14Z)-icosadienoyl-containing glycerolipid + 2 Fe(II)-[cytochrome b5] + O2 + 2 H(+) = an (8Z,11Z,14Z)-icosatrienoyl-containing glycerolipid + 2 Fe(III)-[cytochrome b5] + 2 H2O. It carries out the reaction an (11Z,14Z,17Z)-icosatrienoyl-containing glycerolipid + 2 Fe(II)-[cytochrome b5] + O2 + 2 H(+) = an (8Z,11Z,14Z,17Z)-eicosatetraenoyl-containing glycerolipid + 2 Fe(III)-[cytochrome b5] + 2 H2O. It catalyses the reaction an (11Z)-eicosenoyl-containing glycerolipid + 2 Fe(II)-[cytochrome b5] + O2 + 2 H(+) = a (8Z,11Z)-eicosadienoyl-containing glycerolipid + 2 Fe(III)-[cytochrome b5] + 2 H2O. Its pathway is lipid metabolism; fatty acid metabolism. Its function is as follows. Delta(8)-fatty-acid desaturase which introduces a double bond at the 8-position in 20-carbon chain length fatty acids (C20) that have an existing delta-11 unsaturation (double bond). Whether it acts on CoA-linked substrates (as in animals) or phospholipid-linked substrates (as in plants and fungi) is still not clear. The polypeptide is Delta(8)-fatty-acid desaturase (efd1) (Euglena gracilis).